A 132-amino-acid chain; its full sequence is Large ribosomal subunit protein uL14 (132 aa).

It belongs to the universal ribosomal protein uL14 family. Part of the 50S ribosomal subunit. Forms a cluster with proteins L3 and L24e, part of which may contact the 16S rRNA in 2 intersubunit bridges.

Binds to 23S rRNA. Forms part of two intersubunit bridges in the 70S ribosome. The sequence is that of Large ribosomal subunit protein uL14 from Thermoplasma volcanium (strain ATCC 51530 / DSM 4299 / JCM 9571 / NBRC 15438 / GSS1).